The sequence spans 1456 residues: Putative 1-phosphatidylinositol-3-phosphate 5-kinase FAB1D (1456 aa).

Positions 1–19 are enriched in low complexity; that stretch reads MTPSNSLSSSERSLSGECS. 6 disordered regions span residues 1–110, 533–592, 925–944, 967–987, 1003–1022, and 1137–1159; these read MTPS…EVDG, PVSV…NDIE, ENDN…TPLV, VPED…TSPI, NGQE…DDEV, and NNQD…TNRL. Residues 43 to 57 show a composition bias toward basic and acidic residues; the sequence is ELTKEVKVDRLERKS. A compositionally biased stretch (acidic residues) spans 86–110; it reads REDDSDDVPVWEPPEPENPEDEVDG. The segment covering 533 to 544 has biased composition (low complexity); sequence PVSVDTDVSTTS. Residues 973 to 987 show a composition bias toward polar residues; it reads SQTLCSSSPDTTSPI. The 329-residue stretch at 1115–1443 folds into the PIPK domain; that stretch reads NNEESKKPLS…RFRKFMKTHF (329 aa). The span at 1150–1159 shows a compositional bias: polar residues; that stretch reads RFSSESTNRL.

Component of the PI(3,5)P2 regulatory complex at least composed of ATG18, SAC/FIG4, FAB1 and VAC14. Mg(2+) is required as a cofactor. The cofactor is Mn(2+).

The enzyme catalyses a 1,2-diacyl-sn-glycero-3-phospho-(1D-myo-inositol-3-phosphate) + ATP = a 1,2-diacyl-sn-glycero-3-phospho-(1D-myo-inositol-3,5-bisphosphate) + ADP + H(+). Functionally, the PI(3,5)P2 regulatory complex regulates both the synthesis and turnover of phosphatidylinositol 3,5-bisphosphate (PtdIns(3,5)P2). Catalyzes the phosphorylation of phosphatidylinositol 3-phosphate on the fifth hydroxyl of the myo-inositol ring, to form phosphatidylinositol 3,5-bisphosphate. The chain is Putative 1-phosphatidylinositol-3-phosphate 5-kinase FAB1D (FAB1D) from Arabidopsis thaliana (Mouse-ear cress).